We begin with the raw amino-acid sequence, 838 residues long: Xyloglucanase (838 aa).

Positions 1 to 19 (MKVSRVLALVLGAVIPAHA) are cleaved as a signal peptide. The Nucleophile role is filled by Asp53. 2 N-linked (GlcNAc...) asparagine glycosylation sites follow: Asn232 and Asn436. The Proton donor role is filled by Asp469. The disordered stretch occupies residues 750-801 (GTGGTSSSTKQSSSSTSSASSSTTLRSSVVSTTRASTVTSSRTSSAAGPTGS). The segment covering 754–797 (TSSSTKQSSSSTSSASSSTTLRSSVVSTTRASTVTSSRTSSAAG) has biased composition (low complexity). In terms of domain architecture, CBM1 spans 802 to 838 (GVAGHYAQCGGIGWTGPTQCVAPYVCQKQNDYYYQCV).

Belongs to the glycosyl hydrolase 74 family.

The enzyme catalyses Hydrolysis of (1-&gt;4)-D-glucosidic linkages in xyloglucans so as to successively remove oligosaccharides from the newly-formed chain end after endo-initiation on a polymer molecule.. In terms of biological role, hydrolyzes the glucosidic bonds of unbranched Glc residues in tamarind seed xyloglucan, producing XXXG, XLXG, XXLG and XLLG. Has a low activity against beta-glucan and carboxymethylcellulose. Not active against Avicel, laminarin, xylan, galactomannan, linear and branched arabinans, galactan, polygalacturonic acid, starch, beta-D-Glcp, beta-D-cellobiose, beta-D-Galp, beta-D-Xylp, alpha-D-Xylp, alpha-L-Araf and alpha-L-Arap. The chain is Xyloglucanase from Hypocrea jecorina (strain QM6a) (Trichoderma reesei).